Here is a 320-residue protein sequence, read N- to C-terminus: uncharacterized protein (320 aa).

In terms of domain architecture, Arf-GAP spans 13–132 (ALVLKSLLRE…VLYPEIPSPE (120 aa)). The segment at 28-52 (CADCKRNEQPRWASWNLGVFICIRC) adopts a C4-type zinc-finger fold. Disordered stretches follow at residues 153–212 (NTAS…STRQ), 227–261 (RPQV…YGAF), and 284–320 (NVTS…DVWK). The segment covering 154-176 (TASRSSSAHSVKSTSSATVTNVT) has biased composition (low complexity). Polar residues-rich tracts occupy residues 183 to 210 (SATT…APST) and 228 to 244 (PQVS…YQNL). Low complexity-rich tracts occupy residues 245–257 (PSPV…SSQP) and 295–310 (SPVQ…SLDS).

The protein localises to the cytoplasm. It localises to the golgi apparatus. In terms of biological role, GTPase-activating protein for the ADP ribosylation factor family. This is an uncharacterized protein from Schizosaccharomyces pombe (strain 972 / ATCC 24843) (Fission yeast).